The following is a 519-amino-acid chain: Cytosol aminopeptidase (519 aa).

Position 45 is an N6-succinyllysine (Lys-45). A Phosphoserine modification is found at Ser-54. N6-succinyllysine occurs at positions 61 and 103. 2 positions are modified to phosphoserine: Ser-180 and Ser-194. Residues Leu-202 and Met-203 each contribute to the Zn(2+) site. Lys-221 bears the N6-acetyllysine; alternate mark. Lys-221 bears the N6-succinyllysine; alternate mark. Ser-238 is modified (phosphoserine). 2 residues coordinate Zn(2+): Lys-282 and Asp-287. Substrate contacts are provided by Lys-282, Asp-287, Ser-292, and Lys-294. Asp-287 contributes to the Mg(2+) binding site. The active site involves Lys-294. Arg-303, Asp-305, Asp-364, and Glu-366 together coordinate Zn(2+). Substrate-binding residues include Asp-305 and Asp-364. Mg(2+)-binding residues include Asp-364 and Glu-366. The active site involves Arg-368. Lys-455 is subject to N6-acetyllysine; alternate. Position 455 is an N6-succinyllysine; alternate (Lys-455). Position 476 is an N6-succinyllysine (Lys-476). Lys-489 carries the post-translational modification N6-acetyllysine; alternate. An N6-succinyllysine; alternate modification is found at Lys-489.

Belongs to the peptidase M17 family. Homohexamer. Zn(2+) is required as a cofactor. Mn(2+) serves as cofactor.

It localises to the cytoplasm. It carries out the reaction Release of an N-terminal amino acid, Xaa-|-Yaa-, in which Xaa is preferably Leu, but may be other amino acids including Pro although not Arg or Lys, and Yaa may be Pro. Amino acid amides and methyl esters are also readily hydrolyzed, but rates on arylamides are exceedingly low.. The enzyme catalyses an S-substituted L-cysteinylglycine + H2O = an S-substituted L-cysteine + glycine. The catalysed reaction is L-cysteinylglycine + H2O = L-cysteine + glycine. It catalyses the reaction S-benzyl-L-cysteinylglycine + H2O = S-benzyl-L-cysteine + glycine. It carries out the reaction Release of N-terminal proline from a peptide.. Functionally, cytosolic metallopeptidase that catalyzes the removal of unsubstituted N-terminal hydrophobic amino acids from various peptides. The presence of Zn(2+) ions is essential for the peptidase activity, and the association with other cofactors can modulate the substrate spectificity of the enzyme. For instance, in the presence of Mn(2+), it displays a specific Cys-Gly hydrolyzing activity of Cys-Gly-S-conjugates. Involved in the metabolism of glutathione and in the degradation of glutathione S-conjugates, which may play a role in the control of the cell redox status. The chain is Cytosol aminopeptidase from Mus musculus (Mouse).